A 118-amino-acid polypeptide reads, in one-letter code: Large ribosomal subunit protein bL20 (118 aa).

This sequence belongs to the bacterial ribosomal protein bL20 family.

Its function is as follows. Binds directly to 23S ribosomal RNA and is necessary for the in vitro assembly process of the 50S ribosomal subunit. It is not involved in the protein synthesizing functions of that subunit. This is Large ribosomal subunit protein bL20 from Pseudomonas fluorescens (strain ATCC BAA-477 / NRRL B-23932 / Pf-5).